Consider the following 664-residue polypeptide: UvrABC system protein B (664 aa).

The Helicase ATP-binding domain occupies 23-412 (EGLNRGMRFQ…VVEQIIRPTG (390 aa)). ATP is bound at residue 36–43 (GVTGSGKT). The Beta-hairpin motif lies at 89 to 112 (YYDYYQPEAYIPTKDLYIEKNADI). The Helicase C-terminal domain maps to 429-588 (DLVNEIVKVK…ITPRSVIKPL (160 aa)). The UVR domain maps to 622 to 657 (EEYMAVLEEEMYRAASELRYEDAAALRDELFRIREE).

Belongs to the UvrB family. As to quaternary structure, forms a heterotetramer with UvrA during the search for lesions. Interacts with UvrC in an incision complex.

It is found in the cytoplasm. Functionally, the UvrABC repair system catalyzes the recognition and processing of DNA lesions. A damage recognition complex composed of 2 UvrA and 2 UvrB subunits scans DNA for abnormalities. Upon binding of the UvrA(2)B(2) complex to a putative damaged site, the DNA wraps around one UvrB monomer. DNA wrap is dependent on ATP binding by UvrB and probably causes local melting of the DNA helix, facilitating insertion of UvrB beta-hairpin between the DNA strands. Then UvrB probes one DNA strand for the presence of a lesion. If a lesion is found the UvrA subunits dissociate and the UvrB-DNA preincision complex is formed. This complex is subsequently bound by UvrC and the second UvrB is released. If no lesion is found, the DNA wraps around the other UvrB subunit that will check the other stand for damage. The protein is UvrABC system protein B of Thermotoga maritima (strain ATCC 43589 / DSM 3109 / JCM 10099 / NBRC 100826 / MSB8).